Here is a 270-residue protein sequence, read N- to C-terminus: Tryptophan synthase alpha chain (270 aa).

Residues E50 and D61 each act as proton acceptor in the active site.

It belongs to the TrpA family. In terms of assembly, tetramer of two alpha and two beta chains.

The enzyme catalyses (1S,2R)-1-C-(indol-3-yl)glycerol 3-phosphate + L-serine = D-glyceraldehyde 3-phosphate + L-tryptophan + H2O. Its pathway is amino-acid biosynthesis; L-tryptophan biosynthesis; L-tryptophan from chorismate: step 5/5. Functionally, the alpha subunit is responsible for the aldol cleavage of indoleglycerol phosphate to indole and glyceraldehyde 3-phosphate. The chain is Tryptophan synthase alpha chain from Chlorobium luteolum (strain DSM 273 / BCRC 81028 / 2530) (Pelodictyon luteolum).